The primary structure comprises 101 residues: Interleukin-8 (101 aa).

A signal peptide spans 1 to 22 (MNSKLAVALLATFLLSLTLCEA). Arg-27 bears the Citrulline mark. Disulfide bonds link Cys-34–Cys-61 and Cys-36–Cys-77.

It belongs to the intercrine alpha (chemokine CxC) family. In terms of assembly, homodimer. Interacts with TNFAIP6 (via Link domain); this interaction interferes with chemokine binding to glycosaminoglycans. In terms of processing, citrullination at Arg-27 prevents proteolysis, and dampens tissue inflammation, it also enhances leukocytosis, possibly through impaired chemokine clearance from the blood circulation.

The protein localises to the secreted. Functionally, chemotactic factor that mediates inflammatory response by attracting neutrophils, basophils, and T-cells to clear pathogens and protect the host from infection. Also plays an important role in neutrophil activation. Released in response to an inflammatory stimulus, exerts its effect by binding to the G-protein-coupled receptors CXCR1 and CXCR2, primarily found in neutrophils, monocytes and endothelial cells. G-protein heterotrimer (alpha, beta, gamma subunits) constitutively binds to CXCR1/CXCR2 receptor and activation by IL8 leads to beta and gamma subunits release from Galpha (GNAI2 in neutrophils) and activation of several downstream signaling pathways including PI3K and MAPK pathways. This chain is Interleukin-8 (CXCL8), found in Oryctolagus cuniculus (Rabbit).